Reading from the N-terminus, the 51-residue chain is Ribosome biogenesis protein Nop10 (51 aa).

Belongs to the NOP10 family.

Involved in ribosome biogenesis; more specifically in 18S rRNA pseudouridylation and in cleavage of pre-rRNA. The polypeptide is Ribosome biogenesis protein Nop10 (Methanococcus maripaludis (strain C6 / ATCC BAA-1332)).